The chain runs to 356 residues: Glutamate 5-kinase (356 aa).

Lys-6 contacts ATP. Substrate is bound by residues Ser-46, Asp-135, and Asn-147. An ATP-binding site is contributed by 202–208 (TGGMRSK). One can recognise a PUA domain in the interval 265-342 (KGIIVVDRGA…SEVRKLLNTT (78 aa)).

It belongs to the glutamate 5-kinase family.

It is found in the cytoplasm. The enzyme catalyses L-glutamate + ATP = L-glutamyl 5-phosphate + ADP. The protein operates within amino-acid biosynthesis; L-proline biosynthesis; L-glutamate 5-semialdehyde from L-glutamate: step 1/2. In terms of biological role, catalyzes the transfer of a phosphate group to glutamate to form L-glutamate 5-phosphate. The sequence is that of Glutamate 5-kinase from Aquifex aeolicus (strain VF5).